Consider the following 126-residue polypeptide: Large ribosomal subunit protein bL12 (126 aa).

Over residues 107–116 (EDAEKAKSQL) the composition is skewed to basic and acidic residues. A disordered region spans residues 107–126 (EDAEKAKSQLEEAGATVELK).

The protein belongs to the bacterial ribosomal protein bL12 family. Homodimer. Part of the ribosomal stalk of the 50S ribosomal subunit. Forms a multimeric L10(L12)X complex, where L10 forms an elongated spine to which 2 to 4 L12 dimers bind in a sequential fashion. Binds GTP-bound translation factors.

Forms part of the ribosomal stalk which helps the ribosome interact with GTP-bound translation factors. Is thus essential for accurate translation. This is Large ribosomal subunit protein bL12 from Bifidobacterium adolescentis (strain ATCC 15703 / DSM 20083 / NCTC 11814 / E194a).